Here is a 938-residue protein sequence, read N- to C-terminus: Cyclin-dependent kinase-like 5 (938 aa).

One can recognise a Protein kinase domain in the interval 13-297; it reads FEILGVVGEG…TEQCLNHPTF (285 aa). Residues 19 to 27 and lysine 42 each bind ATP; that span reads VGEGAYGVV. Residue aspartate 135 is the Proton acceptor of the active site. 4 disordered regions span residues 298-348, 382-566, 646-865, and 877-938; these read QTQR…DIQN, KTYQ…RHSK, SPQP…LTAQ, and HPLS…KWKQ. Composition is skewed to polar residues over residues 319-331 and 382-402; these read ESST…QSTK and KTYQ…NNNI. Serine 407 is subject to Phosphoserine. Residues 407–417 show a composition bias toward basic and acidic residues; it reads SPKEAKSKTEF. 3 stretches are compositionally biased toward polar residues: residues 434-462, 473-482, and 494-548; these read LKSS…QPSE, IPQSSRSPSY, and DSKS…SGRN. Serine 479 carries the phosphoserine modification. Basic and acidic residues-rich tracts occupy residues 549-559 and 679-704; these read NRNEGTLDSRR and QKSE…RHLY. Residue serine 720 is modified to Phosphoserine. The span at 728 to 748 shows a compositional bias: polar residues; sequence HENNVSTRVSSLPSDSSSGTN. A Phosphoserine modification is found at serine 761. 2 stretches are compositionally biased toward basic and acidic residues: residues 769 to 778 and 817 to 827; these read DQLKEKEKQG and RPKEWRPEKLS. The segment covering 880 to 891 has biased composition (polar residues); the sequence is SQATGGSSNIRQ.

Belongs to the protein kinase superfamily. CMGC Ser/Thr protein kinase family. CDC2/CDKX subfamily. Interacts with MECP2. Post-translationally, autophosphorylated.

It localises to the nucleus. Its subcellular location is the cytoplasm. The protein localises to the cytoskeleton. It is found in the cilium basal body. The protein resides in the microtubule organizing center. It localises to the centrosome. The catalysed reaction is L-seryl-[protein] + ATP = O-phospho-L-seryl-[protein] + ADP + H(+). The enzyme catalyses L-threonyl-[protein] + ATP = O-phospho-L-threonyl-[protein] + ADP + H(+). Functionally, mediates phosphorylation of MECP2. May regulate ciliogenesis. This chain is Cyclin-dependent kinase-like 5, found in Mus musculus (Mouse).